Here is a 1486-residue protein sequence, read N- to C-terminus: Phosphatidylinositol 3-kinase C2 domain-containing subunit gamma (1486 aa).

A PI3K-RBD domain is found at Lys-285 to Glu-371. The C2 PI3K-type domain maps to Leu-521–Pro-669. In terms of domain architecture, PIK helical spans Arg-684 to Cys-860. One can recognise a PI3K/PI4K catalytic domain in the interval Asp-929–Pro-1207. The G-loop stretch occupies residues Tyr-935–Leu-941. The interval Gly-1071 to Asn-1079 is catalytic loop. Residues His-1090–Thr-1116 are activation loop. The 113-residue stretch at Leu-1240–Gln-1352 folds into the PX domain. The 118-residue stretch at Lys-1369–Ile-1486 folds into the C2 domain.

It belongs to the PI3/PI4-kinase family. As to expression, highly expressed in liver, prostate and testis. Lower levels in small intestine, kidney and pancreas.

Its subcellular location is the membrane. The enzyme catalyses a 1,2-diacyl-sn-glycero-3-phospho-(1D-myo-inositol 4-phosphate) + ATP = a 1,2-diacyl-sn-glycero-3-phospho-(1D-myo-inositol-3,4-bisphosphate) + ADP + H(+). It catalyses the reaction a 1,2-diacyl-sn-glycero-3-phospho-(1D-myo-inositol) + ATP = a 1,2-diacyl-sn-glycero-3-phospho-(1D-myo-inositol-3-phosphate) + ADP + H(+). Its function is as follows. Generates phosphatidylinositol 3-phosphate (PtdIns3P) and phosphatidylinositol 3,4-bisphosphate (PtdIns(3,4)P2) that act as second messengers. May play a role in SDF1A-stimulated chemotaxis. This chain is Phosphatidylinositol 3-kinase C2 domain-containing subunit gamma (PIK3C2G), found in Homo sapiens (Human).